A 183-amino-acid polypeptide reads, in one-letter code: uncharacterized protein (183 aa).

A signal peptide spans 1 to 23 (MSAFKKSLLVAGVAMILSNNVFA). Cys41 and Cys80 are oxidised to a cystine.

This sequence belongs to the fimbrial protein family.

The protein resides in the fimbrium. This is an uncharacterized protein from Escherichia coli (strain K12).